Here is a 295-residue protein sequence, read N- to C-terminus: Nucleotide-binding protein CMS1991 (295 aa).

ATP is bound at residue 19 to 26 (GMSGAGRS). 70-73 (DVRG) provides a ligand contact to GTP.

The protein belongs to the RapZ-like family.

Its function is as follows. Displays ATPase and GTPase activities. The polypeptide is Nucleotide-binding protein CMS1991 (Clavibacter sepedonicus (Clavibacter michiganensis subsp. sepedonicus)).